We begin with the raw amino-acid sequence, 41 residues long: uncharacterized protein (41 aa).

Residues 1 to 12 (MTRNVVRQEFEA) show a composition bias toward basic and acidic residues. The disordered stretch occupies residues 1-23 (MTRNVVRQEFEAPGKPQDSSQQD).

This is an uncharacterized protein from Homo sapiens (Human).